A 327-amino-acid chain; its full sequence is (-)-delta-cadinene synthase (327 aa).

Residues Asp84, Asp85, Asn222, Thr226, and Glu230 each coordinate Mg(2+).

This sequence belongs to the terpene synthase family.

The enzyme catalyses (2E,6E)-farnesyl diphosphate = (-)-delta-cadinene + diphosphate. In terms of biological role, catalyzes the conversion of (2E,6E)-farnesyl diphosphate into (-)-delta-cadinene. Cyclization mechanism involves an intermediate nerolidyl diphosphate leading to a helminthogermacradienyl cation. The chain is (-)-delta-cadinene synthase from Streptomyces clavuligerus.